The sequence spans 294 residues: Nucleotide-binding protein Maqu_2718 (294 aa).

Residue 8 to 15 participates in ATP binding; that stretch reads GRSGSGKS. 61–64 contributes to the GTP binding site; that stretch reads DARN.

It belongs to the RapZ-like family.

In terms of biological role, displays ATPase and GTPase activities. This is Nucleotide-binding protein Maqu_2718 from Marinobacter nauticus (strain ATCC 700491 / DSM 11845 / VT8) (Marinobacter aquaeolei).